We begin with the raw amino-acid sequence, 148 residues long: MFFPNPEERPYKLPALCEEVNISIHEIELDCVYCERQLYRCEVYDFIFRDLCVVYRKGKPLGVCQPCLLFYSKVRQYRRYNQSVYGRTLENLTNKQLCNILIRCGKCQKPLCPLEKQRHVDENKRFHQIADQWTGRCTQCWRPSATVV.

2 zinc fingers span residues 31–67 (CVYC…CQPC) and 104–140 (CGKC…CTQC). The PDZ-binding domain signature appears at 146-148 (TVV).

This sequence belongs to the papillomaviridae E6 protein family. In terms of assembly, forms homodimers. Interacts with ubiquitin-protein ligase UBE3A/E6-AP and thus forms a complex with human TP53. Interacts with human NFX1 and MAGI3. Interacts with human IRF3; this interaction inhibits the establishment of antiviral state. Interacts with human TYK2; this interaction inhibits JAK-STAT activation by interferon alpha. Interacts with host DLG1; this interaction leads to the proteasomal degradation of DLG1.

The protein localises to the host cytoplasm. It localises to the host nucleus. Plays a major role in the induction and maintenance of cellular transformation. Acts mainly as an oncoprotein by stimulating the destruction of many host cell key regulatory proteins. E6 associates with host UBE3A/E6-AP ubiquitin-protein ligase, and inactivates tumor suppressors TP53 and TP73 by targeting them to the 26S proteasome for degradation. In turn, DNA damage and chromosomal instabilities increase and lead to cell proliferation and cancer development. The complex E6/E6AP targets several other substrates to degradation via the proteasome including host DLG1 or NFX1, a repressor of human telomerase reverse transcriptase (hTERT). The resulting increased expression of hTERT prevents the shortening of telomere length leading to cell immortalization. Other cellular targets including BAK1, Fas-associated death domain-containing protein (FADD) and procaspase 8, are degraded by E6/E6AP causing inhibition of apoptosis. E6 also inhibits immune response by interacting with host IRF3 and TYK2. These interactions prevent IRF3 transcriptional activities and inhibit TYK2-mediated JAK-STAT activation by interferon alpha resulting in inhibition of the interferon signaling pathway. The sequence is that of Protein E6 from Homo sapiens (Human).